The following is a 300-amino-acid chain: Probable membrane transporter protein YtnM (300 aa).

The next 8 membrane-spanning stretches (helical) occupy residues 4–24 (LIVF…LGMA), 33–53 (LLAF…AEVV), 76–96 (LVIP…QLPG), 102–122 (YISL…LFQY), 139–159 (IPLG…WGPV), 206–226 (LWVF…AWLV), 231–251 (PQLM…RTLI), and 260–280 (VHPL…LFVL).

Belongs to the 4-toluene sulfonate uptake permease (TSUP) (TC 2.A.102) family.

It is found in the cell membrane. This Bacillus subtilis (strain 168) protein is Probable membrane transporter protein YtnM (ytnM).